The sequence spans 257 residues: 3-methyl-2-oxobutanoate hydroxymethyltransferase (257 aa).

Mg(2+) contacts are provided by Asp44 and Asp83. Residues 44 to 45 (DS), Asp83, and Lys113 each bind 3-methyl-2-oxobutanoate. Residue Glu115 coordinates Mg(2+). Residue Glu182 is the Proton acceptor of the active site.

It belongs to the PanB family. In terms of assembly, homodecamer; pentamer of dimers. Mg(2+) serves as cofactor.

Its subcellular location is the cytoplasm. It carries out the reaction 3-methyl-2-oxobutanoate + (6R)-5,10-methylene-5,6,7,8-tetrahydrofolate + H2O = 2-dehydropantoate + (6S)-5,6,7,8-tetrahydrofolate. The protein operates within cofactor biosynthesis; (R)-pantothenate biosynthesis; (R)-pantoate from 3-methyl-2-oxobutanoate: step 1/2. Functionally, catalyzes the reversible reaction in which hydroxymethyl group from 5,10-methylenetetrahydrofolate is transferred onto alpha-ketoisovalerate to form ketopantoate. The protein is 3-methyl-2-oxobutanoate hydroxymethyltransferase of Rippkaea orientalis (strain PCC 8801 / RF-1) (Cyanothece sp. (strain PCC 8801)).